Here is a 315-residue protein sequence, read N- to C-terminus: MIDDAAPPYVGRFAPSPSGPLHFGSLVAAVGSFLDARAHHGQWRLRIEDVDTPRTVPGAAQDILATLERFGFEWDGKPVWQSARLDAYRDAFERLRAAGQVFPCACTRREMADSALARDGSRLYPGTCRNGLPPGRSAHAWRVRAHGRIAFADRIQGPQEEDLATEVGDYVVLRGDGQFAYQLAVVVDDAAAGVTDIVRGADLLGSTGRQIHLQHLLGYPTPAYAHLPVVVNTAGEKLSKQTLAAPVAALPPARALFAALTFLGQNPPPALGRASLRETWKWAVTHWSLVDVPRQLQAEAPGAFSARARENPSSL.

L-glutamate-binding positions include 12 to 16 and Glu48; that span reads RFAPS. A 'HIGH' region motif is present at residues 15–25; that stretch reads PSPSGPLHFGS. Zn(2+)-binding residues include Cys104, Cys106, Tyr124, and Cys128. L-glutamate contacts are provided by Tyr181 and Arg199. The short motif at 237–241 is the 'KMSKS' region element; it reads KLSKQ. Position 240 (Lys240) interacts with ATP.

It belongs to the class-I aminoacyl-tRNA synthetase family. GluQ subfamily. Zn(2+) is required as a cofactor.

Functionally, catalyzes the tRNA-independent activation of glutamate in presence of ATP and the subsequent transfer of glutamate onto a tRNA(Asp). Glutamate is transferred on the 2-amino-5-(4,5-dihydroxy-2-cyclopenten-1-yl) moiety of the queuosine in the wobble position of the QUC anticodon. The polypeptide is Glutamyl-Q tRNA(Asp) synthetase (Aromatoleum aromaticum (strain DSM 19018 / LMG 30748 / EbN1) (Azoarcus sp. (strain EbN1))).